Consider the following 347-residue polypeptide: NADH-quinone oxidoreductase subunit H (347 aa).

8 helical membrane passes run 25-45, 95-115, 128-148, 168-188, 200-220, 251-271, 284-304, and 324-344; these read ILFM…VAAM, FMFT…FAII, IGIL…LFGG, ISYE…TGSF, GWYI…GVAV, FFIG…CLFF, FIPP…MFIL, and VCLP…LIFS.

This sequence belongs to the complex I subunit 1 family. In terms of assembly, NDH-1 is composed of 14 different subunits. Subunits NuoA, H, J, K, L, M, N constitute the membrane sector of the complex.

It localises to the cell inner membrane. It carries out the reaction a quinone + NADH + 5 H(+)(in) = a quinol + NAD(+) + 4 H(+)(out). In terms of biological role, NDH-1 shuttles electrons from NADH, via FMN and iron-sulfur (Fe-S) centers, to quinones in the respiratory chain. The immediate electron acceptor for the enzyme in this species is believed to be ubiquinone. Couples the redox reaction to proton translocation (for every two electrons transferred, four hydrogen ions are translocated across the cytoplasmic membrane), and thus conserves the redox energy in a proton gradient. This subunit may bind ubiquinone. The sequence is that of NADH-quinone oxidoreductase subunit H from Psychrobacter arcticus (strain DSM 17307 / VKM B-2377 / 273-4).